The following is a 198-amino-acid chain: Dynein light chain Tctex-type protein 2 (198 aa).

The disordered stretch occupies residues 1–34; the sequence is MEKRGRGVKSSPIQTPNQTPQQAPVTPRKERRPS. The segment covering 11-24 has biased composition (polar residues); it reads SPIQTPNQTPQQAP.

The protein belongs to the dynein light chain Tctex-type family. As to quaternary structure, interacts with CCDC159. Interacts with CSNK2B. As to expression, expressed predominantly in testis. Also expressed in brain, lung and trachea.

It localises to the cytoplasm. Its subcellular location is the cytoskeleton. It is found in the cytoplasmic granule. The protein resides in the membrane. In terms of biological role, may be an accessory component of axonemal dynein and cytoplasmic dynein 1. Candidate for involvement in male sterility. In Homo sapiens (Human), this protein is Dynein light chain Tctex-type protein 2.